The chain runs to 549 residues: Cilia- and flagella-associated protein 45 (549 aa).

Residues 1–27 (MPLSTAGVLSSASTASNRSRNRPRYRT) form a disordered region. Coiled coils occupy residues 119 to 232 (KEEL…MMEV) and 259 to 393 (IVEQ…KRNQ). The segment at 391 to 416 (RNQEVADREWRRKEKENAQKKMETEA) is disordered.

This sequence belongs to the CFAP45 family. In terms of assembly, microtubule inner protein component of sperm flagellar doublet microtubules. Interacts with AK8; dimerization with AK8 may create a cavity at the interface of the dimer that can accommodate AMP. Interacts with CFAP52. Interacts with ENKUR. Directly interacts with DNALI1. Interacts with DNAH11. Interacts with DNAI1. In terms of tissue distribution, expressed in trachea multiciliated cells.

Its subcellular location is the cytoplasm. The protein resides in the cytoskeleton. It localises to the cilium axoneme. The protein localises to the flagellum axoneme. It is found in the cell projection. Its subcellular location is the cilium. The protein resides in the flagellum. In terms of biological role, microtubule inner protein (MIP) part of the dynein-decorated doublet microtubules (DMTs) in cilia axoneme, which is required for motile cilia beating. It is an AMP-binding protein that may facilitate dynein ATPase-dependent ciliary and flagellar beating via adenine nucleotide homeostasis. May function as a donor of AMP to AK8 and hence promote ADP production. In Bos taurus (Bovine), this protein is Cilia- and flagella-associated protein 45.